Consider the following 409-residue polypeptide: Diels-Alderase ucsH (409 aa).

Residues 386–406 traverse the membrane as a helical segment; sequence IYFFICMLLAVVTFGYINILE.

The protein belongs to the Diels-Alderase family.

The protein localises to the membrane. It functions in the pathway mycotoxin biosynthesis. In terms of biological role, diels-Alderase; part of the gene cluster that mediates the biosynthesis of UCS1025A, a member of the pyrrolizidinone family that acts as a strong telomerase inhibitor and displays potent antibacterial and antitumor properties. These compounds share a hemiaminal-containing pyrrolizidinone core fused with a gamma-lactone, giving a furopyrrolizidine that is connected to a decalin fragment. The polyketide synthase module (PKS) of the PKS-NRPS ucsA is responsible for the synthesis of the polyketide backbone via the condensation of an acetyl-CoA starter unit with 6 malonyl-CoA units. The downstream nonribosomal peptide synthetase (NRPS) module then amidates the carboxyl end of the polyketide with a 2S,3S-methylproline derived from L-isoleucine by the 2-oxoglutarate-dependent dioxygenase ucsF which converts L-isoleucine to (4S,5S)-4-methylpyrroline-5-carboxylate that is further converted to 2S,3S-methylproline by the pyrroline-5-carboxylate reductase ucsG. Reductive release of the completed aminoacyl polyketide from the assembly line can form the 3-pyrrolin-2-one structure via an intramolecular Knoevenagel reaction. Because ucsA lacks a designated enoylreductase (ER) domain, the required activity is provided the enoyl reductase ucsL. This keto acyclic precursor is the substrate of the Diels-Alderase ucsH, that catalyzes the Diels-Alder cycloaddition. Oxidation of the 3S-methyl group to a carboxylate by the cytochrome P450 monooxygenase ucsK allows an oxa-Michael cyclization that might involve the reductase/dehydrogenase ucsI and which furnishes the furopyrrolizidine. The oxidase ucsJ likely plays a critical role in stereoselective reduction of the C5-C6 double bond to afford the required R-configured carboxylate group. Further enolization and oxidation at C5 by an unidentified enzyme affords the last intermediate that can undergo oxa-Michael cyclization to yield UCS1025A. In Acremonium sp, this protein is Diels-Alderase ucsH.